Reading from the N-terminus, the 239-residue chain is Peptidase E (239 aa).

Catalysis depends on charge relay system residues serine 122, aspartate 137, and histidine 159.

It belongs to the peptidase S51 family.

The protein resides in the cytoplasm. It carries out the reaction Dipeptidase E catalyzes the hydrolysis of dipeptides Asp-|-Xaa. It does not act on peptides with N-terminal Glu, Asn or Gln, nor does it cleave isoaspartyl peptides.. Its function is as follows. Hydrolyzes dipeptides containing N-terminal aspartate residues. May play a role in allowing the cell to use peptide aspartate to spare carbon otherwise required for the synthesis of the aspartate family of amino acids. This chain is Peptidase E, found in Shewanella baltica (strain OS195).